The chain runs to 408 residues: LL-diaminopimelate aminotransferase (408 aa).

Positions 15 and 42 each coordinate substrate. Pyridoxal 5'-phosphate-binding positions include Tyr72, 108-109, Tyr132, Asn187, Tyr218, and 246-248; these read SK and SFS. Positions 109, 132, and 187 each coordinate substrate. N6-(pyridoxal phosphate)lysine is present on Lys249. 2 residues coordinate pyridoxal 5'-phosphate: Arg257 and Asn292. Substrate contacts are provided by Asn292 and Arg388.

It belongs to the class-I pyridoxal-phosphate-dependent aminotransferase family. LL-diaminopimelate aminotransferase subfamily. In terms of assembly, homodimer. It depends on pyridoxal 5'-phosphate as a cofactor.

It carries out the reaction (2S,6S)-2,6-diaminopimelate + 2-oxoglutarate = (S)-2,3,4,5-tetrahydrodipicolinate + L-glutamate + H2O + H(+). Its pathway is amino-acid biosynthesis; L-lysine biosynthesis via DAP pathway; LL-2,6-diaminopimelate from (S)-tetrahydrodipicolinate (aminotransferase route): step 1/1. In terms of biological role, involved in the synthesis of meso-diaminopimelate (m-DAP or DL-DAP), required for both lysine and peptidoglycan biosynthesis. Catalyzes the direct conversion of tetrahydrodipicolinate to LL-diaminopimelate. The sequence is that of LL-diaminopimelate aminotransferase from Prochlorococcus marinus (strain MIT 9211).